Here is a 274-residue protein sequence, read N- to C-terminus: 2,3,4,5-tetrahydropyridine-2,6-dicarboxylate N-succinyltransferase (274 aa).

Substrate-binding residues include Arg104 and Asp141.

It belongs to the transferase hexapeptide repeat family. As to quaternary structure, homotrimer.

Its subcellular location is the cytoplasm. It catalyses the reaction (S)-2,3,4,5-tetrahydrodipicolinate + succinyl-CoA + H2O = (S)-2-succinylamino-6-oxoheptanedioate + CoA. It functions in the pathway amino-acid biosynthesis; L-lysine biosynthesis via DAP pathway; LL-2,6-diaminopimelate from (S)-tetrahydrodipicolinate (succinylase route): step 1/3. This Shewanella frigidimarina (strain NCIMB 400) protein is 2,3,4,5-tetrahydropyridine-2,6-dicarboxylate N-succinyltransferase.